Consider the following 128-residue polypeptide: Large ribosomal subunit protein bL20c (128 aa).

The protein belongs to the bacterial ribosomal protein bL20 family.

The protein resides in the plastid. It is found in the chloroplast. In terms of biological role, binds directly to 23S ribosomal RNA and is necessary for the in vitro assembly process of the 50S ribosomal subunit. It is not involved in the protein synthesizing functions of that subunit. This chain is Large ribosomal subunit protein bL20c, found in Trachelium caeruleum (Blue throatwort).